The sequence spans 326 residues: HTH-type transcriptional regulator BlaA (326 aa).

The 59-residue stretch at 1–59 folds into the HTH lysR-type domain; the sequence is MDVVNACRAFVKVSERGSFTVGAAAAQMSQSVASRRVAALEKHFGERLFDRASRRPSLT. A DNA-binding region (H-T-H motif) is located at residues 19 to 38; the sequence is FTVGAAAAQMSQSVASRRVA. The segment at 289–326 is disordered; it reads TADHGPDPATGAGPGADAGTEPGARAEPGAPEEGAQAC. Low complexity predominate over residues 295 to 326; sequence DPATGAGPGADAGTEPGARAEPGAPEEGAQAC.

Belongs to the LysR transcriptional regulatory family.

Positive regulator of the expression of the gene (blaB) for beta-lactamase. It binds to the blaL-blaA intercistronic region. The protein is HTH-type transcriptional regulator BlaA (blaA) of Streptomyces cacaoi.